A 530-amino-acid chain; its full sequence is Phosphoenolpyruvate carboxykinase (ATP) (530 aa).

Residues Arg58, Tyr195, and Lys201 each contribute to the substrate site. ATP is bound by residues Lys201, His220, and 236 to 244 (GLSGTGKTT). Mn(2+) is bound by residues Lys201 and His220. Position 257 (Asp257) interacts with Mn(2+). ATP is bound by residues Glu285, Arg321, 440-441 (RI), and Thr446. Substrate is bound at residue Arg321.

It belongs to the phosphoenolpyruvate carboxykinase (ATP) family. Mn(2+) is required as a cofactor.

It localises to the cytoplasm. The catalysed reaction is oxaloacetate + ATP = phosphoenolpyruvate + ADP + CO2. Its pathway is carbohydrate biosynthesis; gluconeogenesis. Involved in the gluconeogenesis. Catalyzes the conversion of oxaloacetate (OAA) to phosphoenolpyruvate (PEP) through direct phosphoryl transfer between the nucleoside triphosphate and OAA. This Staphylococcus aureus (strain Mu3 / ATCC 700698) protein is Phosphoenolpyruvate carboxykinase (ATP).